Here is a 120-residue protein sequence, read N- to C-terminus: Seripauperin-6 (120 aa).

The signal sequence occupies residues 1–20; sequence MVKLTSIAAGVAAIAATASA.

Belongs to the SRP1/TIP1 family. Seripauperin subfamily.

This chain is Seripauperin-6 (PAU6), found in Saccharomyces cerevisiae (strain ATCC 204508 / S288c) (Baker's yeast).